Here is a 442-residue protein sequence, read N- to C-terminus: 23S rRNA (uracil(1939)-C(5))-methyltransferase RlmD (442 aa).

The TRAM domain maps to 12–70 (SKQLSAKVTLEVTKLDHLGAGMAQHQGKIVFIPGALPNEKVTVQLTEQKKRHARAKLLK). Residues Cys83, Cys89, Cys92, and Cys171 each coordinate [4Fe-4S] cluster. 6 residues coordinate S-adenosyl-L-methionine: Gln276, Phe305, Asn310, Glu326, Asp353, and Asp373. Residue Cys399 is the Nucleophile of the active site.

Belongs to the class I-like SAM-binding methyltransferase superfamily. RNA M5U methyltransferase family. RlmD subfamily.

It carries out the reaction uridine(1939) in 23S rRNA + S-adenosyl-L-methionine = 5-methyluridine(1939) in 23S rRNA + S-adenosyl-L-homocysteine + H(+). Its function is as follows. Catalyzes the formation of 5-methyl-uridine at position 1939 (m5U1939) in 23S rRNA. The polypeptide is 23S rRNA (uracil(1939)-C(5))-methyltransferase RlmD (Shewanella sediminis (strain HAW-EB3)).